Here is a 547-residue protein sequence, read N- to C-terminus: MAAKDILFDSDARAKLKVGVDKLANAVKVTLGPAGRNVLIDKKFGAPTSTKDGVTVAKEIELEDAFENMGAQMVREVASKTSDVAGDGTTTATVLAQAIYREGLKNVAAGARPIDLKRGIDRAVKEVVAELRSISRNISGKKEIAQVGTISANNDPEIGELIAEAMDKVGKDGVITVEEAKGMDTELKVVEGMQFDRGYLSPYFVTNPETMEAELEEALILIYDKKISNMKELLPILEKSAQSGRPLLIIAEDIEGEALATIVVNKLRGTLKVAAVKAPGFGDRRKAMLEDIAILTGGTVISEEKGYKLENATMAYLGQASRVNIDKDNTTIVEGKGKQEEITARINEIKGQIEKSTSDYDTEKLQERLAKLSGGVAVLNIGASTEVEMKEKKARVEDALHATRAAVQEGIVAGGGVALIRAIKGLERATADNDDQKTGIDIIRRALEEPLRQIVANTGTTDGAVVLEKVRSGEGDYGFNARTEEYENLVDAGVVDPTKVTRSALENAASVASILLTTEAAITDLPEDKADMPAMPPGGMGGMGGMY.

ATP-binding positions include 30 to 33 (TLGP), K51, 87 to 91 (DGTTT), G415, and D496.

This sequence belongs to the chaperonin (HSP60) family. As to quaternary structure, forms a cylinder of 14 subunits composed of two heptameric rings stacked back-to-back. Interacts with the co-chaperonin GroES.

The protein localises to the cytoplasm. The enzyme catalyses ATP + H2O + a folded polypeptide = ADP + phosphate + an unfolded polypeptide.. Together with its co-chaperonin GroES, plays an essential role in assisting protein folding. The GroEL-GroES system forms a nano-cage that allows encapsulation of the non-native substrate proteins and provides a physical environment optimized to promote and accelerate protein folding. In Chlorobaculum parvum (strain DSM 263 / NCIMB 8327) (Chlorobium vibrioforme subsp. thiosulfatophilum), this protein is Chaperonin GroEL.